A 377-amino-acid polypeptide reads, in one-letter code: 2-iminoacetate synthase (377 aa).

Positions asparagine 71–arginine 301 constitute a Radical SAM core domain. Residues cysteine 85, cysteine 89, and cysteine 92 each coordinate [4Fe-4S] cluster.

It belongs to the radical SAM superfamily. ThiH family. As to quaternary structure, forms a heterodimer with ThiG. [4Fe-4S] cluster serves as cofactor.

The catalysed reaction is L-tyrosine + S-adenosyl-L-methionine + NADPH = 2-iminoacetate + 4-methylphenol + 5'-deoxyadenosine + L-methionine + NADP(+). It participates in cofactor biosynthesis; thiamine diphosphate biosynthesis. In terms of biological role, catalyzes the radical-mediated cleavage of tyrosine to 2-iminoacetate and 4-cresol. This Salmonella typhimurium (strain LT2 / SGSC1412 / ATCC 700720) protein is 2-iminoacetate synthase (thiH).